We begin with the raw amino-acid sequence, 512 residues long: Cytochrome P450 monooxygenase gliC (512 aa).

The N-terminal stretch at 1–19 (MAFTLTILVPCMVLALVAA) is a signal peptide. Residues Asn-118, Asn-421, and Asn-434 are each glycosylated (N-linked (GlcNAc...) asparagine). Cys-452 serves as a coordination point for heme.

It belongs to the cytochrome P450 family. Requires heme as cofactor.

It functions in the pathway mycotoxin biosynthesis. Its function is as follows. Cytochrome P450 monooxygenase; part of the gene cluster that mediates the biosynthesis of gliotoxin, a member of the epipolythiodioxopiperazine (ETP) class of toxins characterized by a disulfide bridged cyclic dipeptide. The first step in gliotoxin biosynthesis is the condensation of serine and phenylalanine to form the cyclo-L-phenylalanyl-L-serine diketopiperazine (DKP) by the NRPS gliP. GliP is also able to produce the DKP cyclo-L-tryptophanyl-L-serine, suggesting that the substrate specificity of the first adenylation (A) domain in gliP is sufficiently relaxed to accommodate both L-Phe and L-Trp. The cytochrome P450 monooxygenase gliC has been shown to catalyze the subsequent hydroxylation of the alpha-carbon of L-Phe in cyclo-L-phenylalanyl-L-serine whereas the second cytochrome P450 enzyme, gliF, is presumably involved in the modification of the DKP side chain. The glutathione S-transferase (GST) gliG then forms a bis-glutathionylated biosynthetic intermediate which is responsible for the sulfurization of gliotoxin. This bis-glutathionylated intermediate is subsequently processed by the gamma-glutamyl cyclotransferase gliK to remove both gamma-glutamyl moieties. Subsequent processing via gliI yields a biosynthetic intermediate, which is N-methylated via the N-methyltransferase gliN, before the gliotoxin oxidoreductase gliT-mediated disulfide bridge closure. GliN-mediated amide methylation confers stability to ETP, damping the spontaneous formation of tri- and tetrasulfides. Intracellular dithiol gliotoxin oxidized by gliT is subsequently effluxed by gliA. Gliotoxin contributes to pathogenesis during invasive aspergillosis. In macrophages and neutrophils, gliotoxin showed inhibition of various different cell functions including cytokine production, antigen presentation, phagocytosis, and production of reactive oxygen species. The polypeptide is Cytochrome P450 monooxygenase gliC (Aspergillus fumigatus (strain ATCC MYA-4609 / CBS 101355 / FGSC A1100 / Af293) (Neosartorya fumigata)).